The following is a 177-amino-acid chain: MSRVAKNPVKLPAGVEVKFAGQQLSVKGAKGTLELNVHSSVEVTEESGELRFVARNGDQQARAMAGTTRALVNNMVQGVSQGFERKLQLVGVGYKAQAKGTVLNLALGFSHPVDYELPAGITAETPSQTDILIKGIDKQLVGQVAAEIRDFRPPEPYKGKGVRYADEVVRRKEAKKK.

This sequence belongs to the universal ribosomal protein uL6 family. In terms of assembly, part of the 50S ribosomal subunit.

Functionally, this protein binds to the 23S rRNA, and is important in its secondary structure. It is located near the subunit interface in the base of the L7/L12 stalk, and near the tRNA binding site of the peptidyltransferase center. In Pseudomonas putida (strain W619), this protein is Large ribosomal subunit protein uL6.